The primary structure comprises 554 residues: Arginine--tRNA ligase (554 aa).

Positions 132–142 (ANPTGPIHLGG) match the 'HIGH' region motif.

It belongs to the class-I aminoacyl-tRNA synthetase family. As to quaternary structure, monomer.

The protein localises to the cytoplasm. The enzyme catalyses tRNA(Arg) + L-arginine + ATP = L-arginyl-tRNA(Arg) + AMP + diphosphate. The chain is Arginine--tRNA ligase from Kineococcus radiotolerans (strain ATCC BAA-149 / DSM 14245 / SRS30216).